An 868-amino-acid chain; its full sequence is DNA mismatch repair protein MutS (868 aa).

Position 620-627 (620-627 (GPNMGGKS)) interacts with ATP.

Belongs to the DNA mismatch repair MutS family.

This protein is involved in the repair of mismatches in DNA. It is possible that it carries out the mismatch recognition step. This protein has a weak ATPase activity. The protein is DNA mismatch repair protein MutS of Desulforamulus reducens (strain ATCC BAA-1160 / DSM 100696 / MI-1) (Desulfotomaculum reducens).